The chain runs to 82 residues: Large ribosomal subunit protein uL29 (82 aa).

Belongs to the universal ribosomal protein uL29 family.

The chain is Large ribosomal subunit protein uL29 from Trichodesmium erythraeum (strain IMS101).